Reading from the N-terminus, the 188-residue chain is dCTP deaminase (188 aa).

Residues 111–116, 135–137, Gln156, Tyr170, and Gln180 each bind dCTP; these read KSTYAR and TLE. Glu137 functions as the Proton donor/acceptor in the catalytic mechanism.

The protein belongs to the dCTP deaminase family. In terms of assembly, homotrimer.

It catalyses the reaction dCTP + H2O + H(+) = dUTP + NH4(+). It functions in the pathway pyrimidine metabolism; dUMP biosynthesis; dUMP from dCTP (dUTP route): step 1/2. Its function is as follows. Catalyzes the deamination of dCTP to dUTP. The polypeptide is dCTP deaminase (Marinobacter nauticus (strain ATCC 700491 / DSM 11845 / VT8) (Marinobacter aquaeolei)).